Here is a 360-residue protein sequence, read N- to C-terminus: Peptide chain release factor 1 (360 aa).

The residue at position 235 (Q235) is an N5-methylglutamine.

The protein belongs to the prokaryotic/mitochondrial release factor family. Post-translationally, methylated by PrmC. Methylation increases the termination efficiency of RF1.

It localises to the cytoplasm. Peptide chain release factor 1 directs the termination of translation in response to the peptide chain termination codons UAG and UAA. This Burkholderia cenocepacia (strain HI2424) protein is Peptide chain release factor 1.